Consider the following 492-residue polypeptide: N-succinylglutamate 5-semialdehyde dehydrogenase (492 aa).

220 to 225 (GSANTG) is an NAD(+) binding site. Active-site residues include Glu-243 and Cys-277.

The protein belongs to the aldehyde dehydrogenase family. AstD subfamily.

It carries out the reaction N-succinyl-L-glutamate 5-semialdehyde + NAD(+) + H2O = N-succinyl-L-glutamate + NADH + 2 H(+). It functions in the pathway amino-acid degradation; L-arginine degradation via AST pathway; L-glutamate and succinate from L-arginine: step 4/5. Functionally, catalyzes the NAD-dependent reduction of succinylglutamate semialdehyde into succinylglutamate. This Escherichia coli O6:H1 (strain CFT073 / ATCC 700928 / UPEC) protein is N-succinylglutamate 5-semialdehyde dehydrogenase.